Consider the following 260-residue polypeptide: Methylphosphonate hydroxylase (260 aa).

Residue K107 participates in 2-oxoglutarate binding. The Fe cation site is built by H117, D119, and H195.

Belongs to the PhyH family. Fe(2+) is required as a cofactor.

The catalysed reaction is methylphosphonate + 2-oxoglutarate + O2 = hydroxymethylphosphonate + succinate + CO2. In terms of biological role, part of an oxidative pathway for utilization of methylphosphonic acid as a phosphate source. Catalyzes the conversion of methylphosphonic acid to hydroxymethylphosphonic acid. Is specific for the hydroxylation of methylphosphonate. This is Methylphosphonate hydroxylase from Gimesia maris (strain ATCC 29201 / DSM 8797 / 534-30) (Planctomyces maris).